Here is a 600-residue protein sequence, read N- to C-terminus: Aspartate--tRNA(Asp/Asn) ligase (600 aa).

Residue Glu187 coordinates L-aspartate. Positions 211–214 (QIFK) are aspartate. The L-aspartate site is built by Arg233 and His463. ATP is bound at residue 233-235 (RDE). An ATP-binding site is contributed by Glu497. Residue Arg504 participates in L-aspartate binding. 549–552 (GVDR) is an ATP binding site.

Belongs to the class-II aminoacyl-tRNA synthetase family. Type 1 subfamily. In terms of assembly, homodimer.

The protein resides in the cytoplasm. The catalysed reaction is tRNA(Asx) + L-aspartate + ATP = L-aspartyl-tRNA(Asx) + AMP + diphosphate. In terms of biological role, aspartyl-tRNA synthetase with relaxed tRNA specificity since it is able to aspartylate not only its cognate tRNA(Asp) but also tRNA(Asn). Reaction proceeds in two steps: L-aspartate is first activated by ATP to form Asp-AMP and then transferred to the acceptor end of tRNA(Asp/Asn). In Wolbachia pipientis subsp. Culex pipiens (strain wPip), this protein is Aspartate--tRNA(Asp/Asn) ligase.